Reading from the N-terminus, the 172-residue chain is uncharacterized protein (172 aa).

3 consecutive transmembrane segments (helical) span residues 7–27, 59–79, and 89–109; these read ILISYVGLIKLALAGILCYGI, LMIFLAFGFPIFFIGSFLYLF, and FSLTFAITFFVLFIFGLLFVK.

The protein to M.jannaschii MJ0695.

The protein resides in the cell membrane. This is an uncharacterized protein from Methanocaldococcus jannaschii (strain ATCC 43067 / DSM 2661 / JAL-1 / JCM 10045 / NBRC 100440) (Methanococcus jannaschii).